The following is a 285-amino-acid chain: Phosphate import ATP-binding protein PstB (285 aa).

Residues M22 to F262 enclose the ABC transporter domain. G54–T61 contributes to the ATP binding site. The tract at residues R266–Q285 is disordered. Over residues D272–Q285 the composition is skewed to polar residues.

The protein belongs to the ABC transporter superfamily. Phosphate importer (TC 3.A.1.7) family. In terms of assembly, the complex is composed of two ATP-binding proteins (PstB), two transmembrane proteins (PstC and PstA) and a solute-binding protein (PstS).

It localises to the cell membrane. The catalysed reaction is phosphate(out) + ATP + H2O = ADP + 2 phosphate(in) + H(+). Functionally, part of the ABC transporter complex PstSACB involved in phosphate import. Responsible for energy coupling to the transport system. The polypeptide is Phosphate import ATP-binding protein PstB (Mycobacterium intracellulare).